Reading from the N-terminus, the 382-residue chain is Protein phosphatase 1A (382 aa).

G2 carries N-myristoyl glycine lipidation. The region spanning 23-291 is the PPM-type phosphatase domain; that stretch reads RYGLSSMQGW…DNMSVILICF (269 aa). 4 residues coordinate Mn(2+): D60, G61, D239, and D282. Phosphoserine occurs at positions 375 and 377.

The protein belongs to the PP2C family. As to quaternary structure, monomer. Interacts with SMAD2; the interaction dephosphorylates SMAD2 in its C-terminal SXS motif resulting in disruption of the SMAD2/SMAD4 complex, SMAD2 nuclear export and termination of the TGF-beta-mediated signaling. Interacts with SMAD2; the interaction dephosphorylates SMAD2 in its C-terminal SXS motif resulting in disruption of the SMAD2/SMAD4 complex, SMAD2 nuclear export and termination of the TGF-beta-mediated signaling. Interacts with the phosphorylated form of IKBKB/IKKB. The cofactor is Mg(2+). It depends on Mn(2+) as a cofactor. Post-translationally, N-myristoylation is essential for the recognition of its substrates for dephosphorylation.

The protein resides in the nucleus. It localises to the cytoplasm. Its subcellular location is the cytosol. The protein localises to the membrane. It catalyses the reaction O-phospho-L-seryl-[protein] + H2O = L-seryl-[protein] + phosphate. It carries out the reaction O-phospho-L-threonyl-[protein] + H2O = L-threonyl-[protein] + phosphate. Enzyme with a broad specificity. Negatively regulates TGF-beta signaling through dephosphorylating SMAD2 and SMAD3, resulting in their dissociation from SMAD4, nuclear export of the SMADs and termination of the TGF-beta-mediated signaling. Dephosphorylates PRKAA1 and PRKAA2. Plays an important role in the termination of TNF-alpha-mediated NF-kappa-B activation through dephosphorylating and inactivating IKBKB/IKKB. The chain is Protein phosphatase 1A (PPM1A) from Bos taurus (Bovine).